The chain runs to 276 residues: 3-methyl-2-oxobutanoate hydroxymethyltransferase (276 aa).

Mg(2+)-binding residues include Asp49 and Asp88. 3-methyl-2-oxobutanoate is bound by residues 49 to 50, Asp88, and Lys118; that span reads DS. Mg(2+) is bound at residue Glu120. The active-site Proton acceptor is the Glu187.

This sequence belongs to the PanB family. As to quaternary structure, homodecamer; pentamer of dimers. Mg(2+) is required as a cofactor.

The protein localises to the cytoplasm. The enzyme catalyses 3-methyl-2-oxobutanoate + (6R)-5,10-methylene-5,6,7,8-tetrahydrofolate + H2O = 2-dehydropantoate + (6S)-5,6,7,8-tetrahydrofolate. It participates in cofactor biosynthesis; (R)-pantothenate biosynthesis; (R)-pantoate from 3-methyl-2-oxobutanoate: step 1/2. Catalyzes the reversible reaction in which hydroxymethyl group from 5,10-methylenetetrahydrofolate is transferred onto alpha-ketoisovalerate to form ketopantoate. The protein is 3-methyl-2-oxobutanoate hydroxymethyltransferase of Afipia carboxidovorans (strain ATCC 49405 / DSM 1227 / KCTC 32145 / OM5) (Oligotropha carboxidovorans).